A 148-amino-acid chain; its full sequence is 3-dehydroquinate dehydratase (148 aa).

The Proton acceptor role is filled by Tyr-24. Residues Asn-80, His-86, and Asp-93 each contribute to the substrate site. His-106 acts as the Proton donor in catalysis. Substrate is bound by residues 107-108 and Arg-117; that span reads IS.

The protein belongs to the type-II 3-dehydroquinase family. Homododecamer.

The catalysed reaction is 3-dehydroquinate = 3-dehydroshikimate + H2O. The protein operates within metabolic intermediate biosynthesis; chorismate biosynthesis; chorismate from D-erythrose 4-phosphate and phosphoenolpyruvate: step 3/7. Catalyzes a trans-dehydration via an enolate intermediate. This is 3-dehydroquinate dehydratase from Acidovorax ebreus (strain TPSY) (Diaphorobacter sp. (strain TPSY)).